The sequence spans 976 residues: Dibasic-processing endoprotease (976 aa).

Residues M1–A17 form the signal peptide. N156 carries N-linked (GlcNAc...) asparagine glycosylation. Over residues A172 to D212 the composition is skewed to basic and acidic residues. A disordered region spans residues A172–M246. Residues K213–A231 are compositionally biased toward acidic residues. One can recognise a Peptidase S8 domain in the interval Q277–V595. N291 and N299 each carry an N-linked (GlcNAc...) asparagine glycan. The active-site Charge relay system is D311. Residue N336 is glycosylated (N-linked (GlcNAc...) asparagine). Residues H349 and S528 each act as charge relay system in the active site. The chain crosses the membrane as a helical span at residues H524–V544. Residues V604–D737 form the P/Homo B domain. N-linked (GlcNAc...) asparagine glycosylation is present at N606. The tract at residues G733 to D848 is disordered. A compositionally biased stretch (basic and acidic residues) spans E734 to D830. Residues A855–A875 traverse the membrane as a helical segment. N886 is a glycosylation site (N-linked (GlcNAc...) asparagine). Positions P914–G976 are disordered. Basic and acidic residues-rich tracts occupy residues E915–Y928 and M940–G976.

This sequence belongs to the peptidase S8 family. Furin subfamily.

The protein localises to the membrane. This chain is Dibasic-processing endoprotease (XPR6), found in Yarrowia lipolytica (strain CLIB 122 / E 150) (Yeast).